Here is a 377-residue protein sequence, read N- to C-terminus: Probable sensor histidine kinase HK (377 aa).

2 disordered regions span residues 1-169 and 346-377; these read MAHP…RPAD and LPTPRPPFHEELPRITSSDTKDPNREHDTSDQ. Basic residues predominate over residues 10–54; the sequence is RLQRRHGARSGSSRCRHRRPVPRRRSRSRPRWRAARAHRRHHRRS. Positions 84 to 98 are enriched in basic and acidic residues; it reads RRPDPRGGANTDHHA. Basic residues-rich tracts occupy residues 99-115 and 137-146; these read APRHRRAAAGTSHRRRD and TTVRRRRQPR. The region spanning 146–350 is the Histidine kinase domain; sequence RITHPVGTAD…ELRITLPTPR (205 aa). H149 carries the post-translational modification Phosphohistidine; by autocatalysis. Residues 352 to 377 show a composition bias toward basic and acidic residues; the sequence is PFHEELPRITSSDTKDPNREHDTSDQ.

In terms of processing, autophosphorylated.

It catalyses the reaction ATP + protein L-histidine = ADP + protein N-phospho-L-histidine.. Its function is as follows. Member of the two-component system HK/TcrA. Phosphorylates TcrA. In Mycobacterium tuberculosis (strain CDC 1551 / Oshkosh), this protein is Probable sensor histidine kinase HK.